The primary structure comprises 100 residues: NADH-quinone oxidoreductase subunit K (100 aa).

Transmembrane regions (helical) follow at residues 4–24 (LQHG…GLVI), 28–48 (LLFM…AFVV), and 60–80 (IMYI…LALL).

It belongs to the complex I subunit 4L family. In terms of assembly, NDH-1 is composed of 13 different subunits. Subunits NuoA, H, J, K, L, M, N constitute the membrane sector of the complex.

The protein localises to the cell inner membrane. The enzyme catalyses a quinone + NADH + 5 H(+)(in) = a quinol + NAD(+) + 4 H(+)(out). Its function is as follows. NDH-1 shuttles electrons from NADH, via FMN and iron-sulfur (Fe-S) centers, to quinones in the respiratory chain. The immediate electron acceptor for the enzyme in this species is believed to be ubiquinone. Couples the redox reaction to proton translocation (for every two electrons transferred, four hydrogen ions are translocated across the cytoplasmic membrane), and thus conserves the redox energy in a proton gradient. The protein is NADH-quinone oxidoreductase subunit K of Cronobacter sakazakii (strain ATCC BAA-894) (Enterobacter sakazakii).